The primary structure comprises 280 residues: uncharacterized protein (280 aa).

Disordered stretches follow at residues 1-83 (MELK…EEEQ) and 248-280 (IRHREEKDQRDQNQKQKQDDKEQDSYKIEEARL). Residues 12–25 (SAKTDNHTVYQNSP) are compositionally biased toward polar residues. 2 stretches are compositionally biased toward basic and acidic residues: residues 41 to 71 (KQTRQEKTTSSKGNTRTESRKFADEEKRVDD) and 249 to 280 (RHREEKDQRDQNQKQKQDDKEQDSYKIEEARL).

This sequence belongs to the chlamydial CPn_0705/CT_671/TC_0042 family.

This is an uncharacterized protein from Chlamydia pneumoniae (Chlamydophila pneumoniae).